Reading from the N-terminus, the 182-residue chain is Acireductone dioxygenase (182 aa).

The Fe(2+) site is built by His-100, His-102, Glu-106, and His-145. His-100, His-102, Glu-106, and His-145 together coordinate Ni(2+).

The protein belongs to the acireductone dioxygenase (ARD) family. In terms of assembly, monomer. The cofactor is Fe(2+). Ni(2+) is required as a cofactor.

It catalyses the reaction 1,2-dihydroxy-5-(methylsulfanyl)pent-1-en-3-one + O2 = 3-(methylsulfanyl)propanoate + CO + formate + 2 H(+). It carries out the reaction 1,2-dihydroxy-5-(methylsulfanyl)pent-1-en-3-one + O2 = 4-methylsulfanyl-2-oxobutanoate + formate + 2 H(+). The protein operates within amino-acid biosynthesis; L-methionine biosynthesis via salvage pathway; L-methionine from S-methyl-5-thio-alpha-D-ribose 1-phosphate: step 5/6. In terms of biological role, catalyzes 2 different reactions between oxygen and the acireductone 1,2-dihydroxy-3-keto-5-methylthiopentene (DHK-MTPene) depending upon the metal bound in the active site. Fe-containing acireductone dioxygenase (Fe-ARD) produces formate and 2-keto-4-methylthiobutyrate (KMTB), the alpha-ketoacid precursor of methionine in the methionine recycle pathway. Ni-containing acireductone dioxygenase (Ni-ARD) produces methylthiopropionate, carbon monoxide and formate, and does not lie on the methionine recycle pathway. The sequence is that of Acireductone dioxygenase from Nostoc sp. (strain PCC 7120 / SAG 25.82 / UTEX 2576).